The chain runs to 69 residues: Large ribosomal subunit protein uL29 (69 aa).

It belongs to the universal ribosomal protein uL29 family.

This is Large ribosomal subunit protein uL29 from Synechococcus sp. (strain WH7803).